The primary structure comprises 228 residues: Phosphoglycolate phosphatase (228 aa).

The Nucleophile role is filled by Asp-12. Residues Asp-12, Asp-14, and Asp-177 each coordinate Mg(2+).

The protein belongs to the HAD-like hydrolase superfamily. CbbY/CbbZ/Gph/YieH family. Mg(2+) is required as a cofactor.

The enzyme catalyses 2-phosphoglycolate + H2O = glycolate + phosphate. It participates in organic acid metabolism; glycolate biosynthesis; glycolate from 2-phosphoglycolate: step 1/1. Functionally, specifically catalyzes the dephosphorylation of 2-phosphoglycolate. Is involved in the dissimilation of the intracellular 2-phosphoglycolate formed during the DNA repair of 3'-phosphoglycolate ends, a major class of DNA lesions induced by oxidative stress. This is Phosphoglycolate phosphatase from Vibrio vulnificus (strain YJ016).